The chain runs to 145 residues: Hemoglobin subunit beta-A (145 aa).

Positions 1–145 (MLTAEEKAAV…VANALAHRYH (145 aa)) constitute a Globin domain. 2 residues coordinate heme b: histidine 62 and histidine 91.

The protein belongs to the globin family. As to quaternary structure, heterotetramer of two alpha chains and two beta chains. Red blood cells.

In terms of biological role, involved in oxygen transport from the lung to the various peripheral tissues. This chain is Hemoglobin subunit beta-A, found in Bos javanicus (Wild banteng).